Reading from the N-terminus, the 178-residue chain is Interleukin-10 (178 aa).

An N-terminal signal peptide occupies residues 1 to 18 (MHSSALLCCLVLLTGVRA). Cystine bridges form between Cys30-Cys126 and Cys80-Cys132. An N-linked (GlcNAc...) asparagine glycan is attached at Asn134.

Belongs to the IL-10 family. As to quaternary structure, homodimer. Interacts with IL10RA and IL10RB. Produced by a variety of cell lines, including T-cells, macrophages, mast cells and other cell types.

It is found in the secreted. Major immune regulatory cytokine that acts on many cells of the immune system where it has profound anti-inflammatory functions, limiting excessive tissue disruption caused by inflammation. Mechanistically, IL10 binds to its heterotetrameric receptor comprising IL10RA and IL10RB leading to JAK1 and STAT2-mediated phosphorylation of STAT3. In turn, STAT3 translocates to the nucleus where it drives expression of anti-inflammatory mediators. Targets antigen-presenting cells (APCs) such as macrophages and monocytes and inhibits their release of pro-inflammatory cytokines including granulocyte-macrophage colony-stimulating factor /GM-CSF, granulocyte colony-stimulating factor/G-CSF, IL-1 alpha, IL-1 beta, IL-6, IL-8 and TNF-alpha. Also interferes with antigen presentation by reducing the expression of MHC-class II and co-stimulatory molecules, thereby inhibiting their ability to induce T cell activation. In addition, controls the inflammatory response of macrophages by reprogramming essential metabolic pathways including mTOR signaling. The polypeptide is Interleukin-10 (IL10) (Homo sapiens (Human)).